We begin with the raw amino-acid sequence, 203 residues long: Eukaryotic translation initiation factor isoform 4E (203 aa).

A compositionally biased stretch (low complexity) spans 1 to 25; it reads MATETAGAVVESSSAATVPSPAPEA. The disordered stretch occupies residues 1–27; it reads MATETAGAVVESSSAATVPSPAPEAGS. MRNA is bound by residues 47–52, lysine 79, and 97–98; these read QGAAWG and WE. Residues cysteine 102 and cysteine 141 are joined by a disulfide bond. 148–153 provides a ligand contact to mRNA; the sequence is RQRQDK.

The protein belongs to the eukaryotic initiation factor 4E family. In terms of assembly, EIF4F is a multi-subunit complex, the composition of which varies with external and internal environmental conditions. It is composed of at least EIF4A, EIF4E and EIF4G. EIF4E is also known to interact with other partners. In higher plants two isoforms of EIF4F have been identified, named isoform EIF4F and isoform EIF(iso)4F. Isoform EIF4F has subunits p220 and p26, whereas isoform EIF(iso)4F has subunits p82 and p28. As to quaternary structure, (Microbial infection) Interacts with the potyvirus peanut stripe virus (PStV) helper component proteinase (HC-Pro) in the cytoplasm and with PStV viral genome-linked protein (VPg) in the nucleus; these interactions are possible in susceptible hosts but impaired in resistant plants. According to the redox status, the Cys-102-Cys-141 disulfide bridge may have a role in regulating protein function by affecting its ability to bind capped mRNA. As to expression, expressed ubiquitously with highest levels in young leaves and roots, and lowest levels in flowers.

The protein localises to the cytoplasm. Its subcellular location is the nucleus. Functionally, component of the protein complex eIF4F, which is involved in the recognition of the mRNA cap, ATP-dependent unwinding of 5'-terminal secondary structure and recruitment of mRNA to the ribosome. Recognizes and binds the 7-methylguanosine-containing mRNA cap during an early step in the initiation of protein synthesis and facilitates ribosome binding by inducing the unwinding of the mRNAs secondary structures. Key component of recessive resistance to potyviruses such as peanut stripe virus (PStV). (Microbial infection) Susceptibility host factor required for viral infection by recruiting viral RNAs to the host ribosomal complex via an interaction with viral genome-linked protein (VPg). The sequence is that of Eukaryotic translation initiation factor isoform 4E from Arachis hypogaea (Peanut).